Here is a 473-residue protein sequence, read N- to C-terminus: Photosystem II CP43 reaction center protein (473 aa).

A propeptide spanning residues 1–14 (MKTLYSLRRSYPVE) is cleaved from the precursor. Thr15 is modified (N-acetylthreonine). Thr15 is modified (phosphothreonine). Transmembrane regions (helical) follow at residues 69–93 (LFEVAHFVPEKPMYEQGLILLPHLA), 134–155 (LIGPETLEESFPFFGYVWKDKN), 178–200 (KALYFGGLYDTWAPGGGDVRKIT), 255–275 (KPFAWARRAFVWSGEAYLSYS), and 291–312 (WFNNTAYPSEFYGPTGPEASQA). A [CaMn4O5] cluster-binding site is contributed by Glu367. A helical transmembrane segment spans residues 447 to 471 (RARAAAAGFEKGIDRDTEPVLFMNP).

It belongs to the PsbB/PsbC family. PsbC subfamily. As to quaternary structure, PSII is composed of 1 copy each of membrane proteins PsbA, PsbB, PsbC, PsbD, PsbE, PsbF, PsbH, PsbI, PsbJ, PsbK, PsbL, PsbM, PsbT, PsbX, PsbY, PsbZ, Psb30/Ycf12, at least 3 peripheral proteins of the oxygen-evolving complex and a large number of cofactors. It forms dimeric complexes. Binds multiple chlorophylls and provides some of the ligands for the Ca-4Mn-5O cluster of the oxygen-evolving complex. It may also provide a ligand for a Cl- that is required for oxygen evolution. PSII binds additional chlorophylls, carotenoids and specific lipids. serves as cofactor.

Its subcellular location is the plastid. The protein resides in the chloroplast thylakoid membrane. Functionally, one of the components of the core complex of photosystem II (PSII). It binds chlorophyll and helps catalyze the primary light-induced photochemical processes of PSII. PSII is a light-driven water:plastoquinone oxidoreductase, using light energy to abstract electrons from H(2)O, generating O(2) and a proton gradient subsequently used for ATP formation. The sequence is that of Photosystem II CP43 reaction center protein from Zygnema circumcarinatum (Green alga).